Here is a 630-residue protein sequence, read N- to C-terminus: Putative adenylate cyclase regulatory protein (630 aa).

An RING-type zinc finger spans residues 10-46 (CAVCREPWAEGALELFPCRHVFCTVCVVERWRCPSCQ). 18 LRR repeats span residues 184-206 (FLVH…CRLK), 207-230 (TLEA…CALP), 231-251 (QLTS…RCIH), 255-277 (KLKV…GGMR), 278-301 (SLEK…CKFS), 302-324 (NLRE…KNLI), 325-347 (NLKV…ERLV), 348-370 (NLDK…ANLS), 371-393 (NLKE…QDLN), 394-416 (NLEV…KNLS), 417-439 (KMRE…ETLK), 440-462 (GLEE…WSLH), 463-485 (HLRV…EGIT), 486-508 (GLEE…WNLR), 509-531 (NVCV…QCLT), 532-554 (GLEE…GNLR), 555-577 (NLKC…DRLV), and 578-599 (NLEK…MELM).

Its function is as follows. May interact with adenylate cyclase to regulate its activity. In terms of biological role, may be involved in the postranscriptional regulation of genes in VSG expression sites. This is Putative adenylate cyclase regulatory protein (ESAG8C) from Trypanosoma equiperdum.